A 225-amino-acid chain; its full sequence is MKNLYKWPAAQSLYPNQGKKSYAGKRFRYRLRSWLHHSKIKQFEQFVTQNPQLIPLLNARPNYSYPVAHRFLDKRFSAKQRLQKITDNLLFLPQKLAHLPPLWEQAVNFGEIIADFELWLNINEHQPMEGFWALELRHRPTNQLVYLLTFGKLDEALLIAVIQGPNFEGSKELVKQLTKSCHGLRPAYLMVETMKALTAVLGYQSLLGIPQKYQNKSAGCKVSAM.

The protein to H.influenzae HI_1119.

Its subcellular location is the cell membrane. The protein is Membrane protein LapB (lapB) of Mannheimia haemolytica (Pasteurella haemolytica).